Reading from the N-terminus, the 2079-residue chain is Protein xmas (2079 aa).

The RRM domain occupies lysine 12–asparagine 83. Residues asparagine 112–arginine 152 are disordered. The region spanning aspartate 342–tyrosine 525 is the PCI domain. The sufficient for Orc3 binding stretch occupies residues proline 835–alanine 1359. Disordered stretches follow at residues arginine 1335 to methionine 1360, alanine 1755 to alanine 1778, lysine 1930 to alanine 1963, and serine 2032 to leucine 2079. Residues histidine 1764 to lysine 1776 are compositionally biased toward basic residues. The span at proline 2048–valine 2059 shows a compositional bias: low complexity. Residues glycine 2070 to leucine 2079 are compositionally biased toward polar residues.

It belongs to the SAC3 family. Component of the nuclear pore complex (NPC)-associated TREX-2/AMEX complex (anchoring and mRNA export complex), composed of e(y)2, xmas and PCID2. Within the TREX-2/ AMEX complex, interactions with e(y)2 is required for localization of e(y)2 to the nuclear periphery. Interaction between the TREX-2/AMEX complex and the ORC complex is required for ORC localization to mRNPs, and consequently mRNA export. Within the TREX-2/AMEX-ORC complex, interacts with Orc6, (via C-terminus) with Orc3, and weakly interacts with Orc4. However, another report found that the interaction with Orc3 is not direct, instead it is mediated via e(y)2. Interacts with piwi. Expressed in ovaries (at protein level). As to expression, detected in the testes and ovaries, with expression levels higher in oocytes than in testicular cells (at protein level). In terms of tissue distribution, detected in the testes and ovaries (at protein level). Detected in the testes.

The protein resides in the nucleus. The protein localises to the nucleoplasm. It is found in the nucleus membrane. Its subcellular location is the cytoplasm. Functionally, involved in mRNA export and mRNA coupled transcription activation. Component of the nuclear pore complex (NPC)-associated TREX-2/AMEX complex (anchoring and mRNA export complex) which functions in docking export-competent ribonucleoprotein particles (mRNPs) to the nuclear entrance of the nuclear pore complex (nuclear basket), thereby enabling the export of mRNAs to the cytoplasm through the nuclear pores. The TREX-2/AMEX complex also functions with the transcriptional coactivator SAGA/TFTC complex, to anchor a subset of transcription sites to the nuclear pore complex basket in order to achieve efficient transcription and export of their resulting mRNAs. Within the complex, required for localization of e(y)2 to the nuclear periphery. The chain is Protein xmas from Drosophila melanogaster (Fruit fly).